The chain runs to 404 residues: Argininosuccinate synthase (404 aa).

Residues 10–18 and A38 contribute to the ATP site; that span reads AYSGGVDTS. Y89 provides a ligand contact to L-citrulline. G119 serves as a coordination point for ATP. L-aspartate is bound by residues T121, N125, and D126. N125 serves as a coordination point for L-citrulline. Residues R129, S177, S186, E262, and Y274 each contribute to the L-citrulline site.

Belongs to the argininosuccinate synthase family. Type 1 subfamily. As to quaternary structure, homotetramer.

The protein localises to the cytoplasm. It catalyses the reaction L-citrulline + L-aspartate + ATP = 2-(N(omega)-L-arginino)succinate + AMP + diphosphate + H(+). It participates in amino-acid biosynthesis; L-arginine biosynthesis; L-arginine from L-ornithine and carbamoyl phosphate: step 2/3. The polypeptide is Argininosuccinate synthase (Prochlorococcus marinus (strain MIT 9215)).